The chain runs to 238 residues: 3-deoxy-D-manno-octulosonic acid kinase (238 aa).

Asp167 is an active-site residue.

This sequence belongs to the protein kinase superfamily. KdkA/RfaP family.

It is found in the cell inner membrane. The enzyme catalyses an alpha-Kdo-(2-&gt;6)-lipid IVA + ATP = a 4-O-phospho-alpha-Kdo-(2-&gt;6)-lipid IVA + ADP + H(+). Its pathway is bacterial outer membrane biogenesis; LPS core biosynthesis. Catalyzes the ATP-dependent phosphorylation of the 3-deoxy-D-manno-octulosonic acid (Kdo) residue in Kdo-lipid IV(A) at the 4-OH position. This chain is 3-deoxy-D-manno-octulosonic acid kinase, found in Vibrio parahaemolyticus serotype O3:K6 (strain RIMD 2210633).